A 395-amino-acid chain; its full sequence is MAISSNLLLCLSLFIFIITKSALAQKCSNYKFSTNRLFESCNDLPVLDSFLHYTYDSSSGNLQIAYRHTKLTPGKWVAWAVNPTSTGMVGAQAIVAYPQSDGTVRAYTSPISSYQTSLLEAELSFNVSQLSATYQNNEMVIYAILNLPLANGGIINTVWQDGSLSGNNPLPHPTSGNNVRSVSTLNLVSGASGSTSTGAGGASKLRKRNIHGILNGVSWGIMMPIGAIIARYLKVSKSADPAWFYLHVFCQSSAYIIGVAGWATGLKLGNESAGIQFTFHRAVGIALFCLATIQVFAMFLRPKPEHKYRVYWNIYHHTVGYSVIILAVVNVFKGLDILSPEKQWRNAYTAIIVVLGIVAVVLEGFTWYVVIKRGKAEASAKTSQRVGNDGRSLYV.

The first 24 residues, 1 to 24 (MAISSNLLLCLSLFIFIITKSALA), serve as a signal peptide directing secretion. Residues 47–162 (LDSFLHYTYD…GIINTVWQDG (116 aa)) enclose the DOMON domain. The Cytochrome b561 domain occupies 176–371 (GNNVRSVSTL…LEGFTWYVVI (196 aa)). 2 helical membrane-spanning segments follow: residues 210-230 (IHGI…AIIA) and 242-262 (AWFY…VAGW). His-211, His-247, and His-280 together coordinate heme b. A helical transmembrane segment spans residues 282–302 (AVGIALFCLATIQVFAMFLRP). His-316 contributes to the heme b binding site. 2 helical membrane-spanning segments follow: residues 318-338 (TVGY…LDIL) and 351-371 (IIVV…YVVI).

Heme b is required as a cofactor.

It localises to the membrane. May act as a catecholamine-responsive trans-membrane electron transporter. The polypeptide is Cytochrome b561 and DOMON domain-containing protein At5g47530 (Arabidopsis thaliana (Mouse-ear cress)).